A 141-amino-acid chain; its full sequence is Putative antiholin (141 aa).

3 helical membrane-spanning segments follow: residues 4 to 24 (LSLSLMLNVSLALMLALSLIY), 32 to 52 (FVAAWAILATVICVVAGGVGV), and 94 to 114 (VVVVATFISLVAAGWIFTALI).

Interacts with holin; this interaction this interaction blocks the holin homomultimerization and delays the host cell lysis.

It localises to the host cell inner membrane. Involved in lysis inhibition. Interacts with and inhibits the holin thereby delaying the host cell lysis timing. The polypeptide is Putative antiholin (lysA) (Enterobacteriaceae (Bacteriophage P2)).